We begin with the raw amino-acid sequence, 269 residues long: Thiazole synthase (269 aa).

Lys105 serves as the catalytic Schiff-base intermediate with DXP. 1-deoxy-D-xylulose 5-phosphate contacts are provided by residues Gly166, 192-193 (AG), and 214-215 (NT). The disordered stretch occupies residues 245-269 (AMSAQDAAQPSTPVLGTPFWHHDHG).

Belongs to the ThiG family. As to quaternary structure, homotetramer. Forms heterodimers with either ThiH or ThiS.

The protein resides in the cytoplasm. The catalysed reaction is [ThiS sulfur-carrier protein]-C-terminal-Gly-aminoethanethioate + 2-iminoacetate + 1-deoxy-D-xylulose 5-phosphate = [ThiS sulfur-carrier protein]-C-terminal Gly-Gly + 2-[(2R,5Z)-2-carboxy-4-methylthiazol-5(2H)-ylidene]ethyl phosphate + 2 H2O + H(+). It functions in the pathway cofactor biosynthesis; thiamine diphosphate biosynthesis. Catalyzes the rearrangement of 1-deoxy-D-xylulose 5-phosphate (DXP) to produce the thiazole phosphate moiety of thiamine. Sulfur is provided by the thiocarboxylate moiety of the carrier protein ThiS. In vitro, sulfur can be provided by H(2)S. The polypeptide is Thiazole synthase (Paracidovorax citrulli (strain AAC00-1) (Acidovorax citrulli)).